The sequence spans 292 residues: Putative xanthine dehydrogenase FAD-binding subunit XdhB (292 aa).

Residues 1-176 enclose the FAD-binding PCMH-type domain; it reads MFDFASYHRA…VAFHFPPQPK (176 aa). FAD is bound by residues 27–34, 109–113, Ile-165, and Phe-184; these read KLLAGGTD and ATYGG.

Heterotrimer of XdhA, XdhB and XdhC. FAD serves as cofactor.

The enzyme catalyses xanthine + NAD(+) + H2O = urate + NADH + H(+). The catalysed reaction is hypoxanthine + NAD(+) + H2O = xanthine + NADH + H(+). The protein operates within purine metabolism; hypoxanthine degradation; urate from hypoxanthine: step 1/2. It participates in purine metabolism; hypoxanthine degradation; urate from hypoxanthine: step 2/2. Functionally, presumed to be a dehydrogenase, but possibly an oxidase. Participates in limited purine salvage (requires aspartate) but does not support aerobic growth on purines as the sole carbon source (purine catabolism). The protein is Putative xanthine dehydrogenase FAD-binding subunit XdhB (xdhB) of Escherichia coli (strain K12).